Here is a 585-residue protein sequence, read N- to C-terminus: Aspartate--tRNA(Asp/Asn) ligase (585 aa).

Glu175 contacts L-aspartate. Residues 199–202 are aspartate; the sequence is QLFK. Residue Arg221 participates in L-aspartate binding. Residues 221-223 and Gln230 contribute to the ATP site; that span reads RDE. Position 448 (His448) interacts with L-aspartate. ATP is bound at residue Glu482. Arg489 lines the L-aspartate pocket. Position 534–537 (534–537) interacts with ATP; it reads GLDR.

The protein belongs to the class-II aminoacyl-tRNA synthetase family. Type 1 subfamily. In terms of assembly, homodimer.

The protein resides in the cytoplasm. The enzyme catalyses tRNA(Asx) + L-aspartate + ATP = L-aspartyl-tRNA(Asx) + AMP + diphosphate. Functionally, aspartyl-tRNA synthetase with relaxed tRNA specificity since it is able to aspartylate not only its cognate tRNA(Asp) but also tRNA(Asn). Reaction proceeds in two steps: L-aspartate is first activated by ATP to form Asp-AMP and then transferred to the acceptor end of tRNA(Asp/Asn). This Natranaerobius thermophilus (strain ATCC BAA-1301 / DSM 18059 / JW/NM-WN-LF) protein is Aspartate--tRNA(Asp/Asn) ligase.